The chain runs to 265 residues: uncharacterized protein (265 aa).

A signal peptide spans 1–20; sequence MSRAMALFFVLCWIQDEIVL. The helical transmembrane segment at 192–212 threads the bilayer; the sequence is IIAAVSGVAILMAIVLLLLGL.

Its subcellular location is the membrane. This is an uncharacterized protein from Homo sapiens (Human).